Here is a 338-residue protein sequence, read N- to C-terminus: Large ribosomal subunit protein uL10 (338 aa).

The segment at 297–338 (PSAQQTQTQQSTAEEKKEEKKEEEKKGPSEEEIGSGLASLFG) is disordered. Low complexity predominate over residues 298–308 (SAQQTQTQQST). Residues 309–325 (AEEKKEEKKEEEKKGPS) are compositionally biased toward basic and acidic residues.

The protein belongs to the universal ribosomal protein uL10 family. As to quaternary structure, part of the 50S ribosomal subunit. Forms part of the ribosomal stalk which helps the ribosome interact with GTP-bound translation factors. Forms a heptameric L10(L12)2(L12)2(L12)2 complex, where L10 forms an elongated spine to which the L12 dimers bind in a sequential fashion.

Its function is as follows. Forms part of the ribosomal stalk, playing a central role in the interaction of the ribosome with GTP-bound translation factors. The polypeptide is Large ribosomal subunit protein uL10 (Saccharolobus islandicus (strain M.14.25 / Kamchatka #1) (Sulfolobus islandicus)).